A 135-amino-acid polypeptide reads, in one-letter code: MNTMNVNIVTPNGSVYNQDNVEITVLQTVGGDMGVMYGHIPTVTAIHTGYVKVHYTDGIDYIAVSDGFVEIRQEKTSIIVQTAEKAEDIDVRRAESAKERAESHLNNNDEDTDINRAKRALERAENRLKVSDLLK.

The span at 90 to 103 (DVRRAESAKERAES) shows a compositional bias: basic and acidic residues. Residues 90–115 (DVRRAESAKERAESHLNNNDEDTDIN) form a disordered region.

This sequence belongs to the ATPase epsilon chain family. As to quaternary structure, F-type ATPases have 2 components, CF(1) - the catalytic core - and CF(0) - the membrane proton channel. CF(1) has five subunits: alpha(3), beta(3), gamma(1), delta(1), epsilon(1). CF(0) has three main subunits: a, b and c.

The protein localises to the cell membrane. Produces ATP from ADP in the presence of a proton gradient across the membrane. The protein is ATP synthase epsilon chain of Staphylococcus carnosus (strain TM300).